A 441-amino-acid polypeptide reads, in one-letter code: Ribosomal protein uS12 methylthiotransferase RimO (441 aa).

Positions 8 to 118 (PKIGFVSLGC…VLEHVHHYSP (111 aa)) constitute an MTTase N-terminal domain. [4Fe-4S] cluster-binding residues include cysteine 17, cysteine 53, cysteine 82, cysteine 150, cysteine 154, and cysteine 157. In terms of domain architecture, Radical SAM core spans 136-373 (LTPRHYAYLK…MQLQQQISAE (238 aa)). The TRAM domain occupies 376-441 (QEKVGREILV…DEYDLWGTRV (66 aa)).

This sequence belongs to the methylthiotransferase family. RimO subfamily. Requires [4Fe-4S] cluster as cofactor.

It is found in the cytoplasm. It carries out the reaction L-aspartate(89)-[ribosomal protein uS12]-hydrogen + (sulfur carrier)-SH + AH2 + 2 S-adenosyl-L-methionine = 3-methylsulfanyl-L-aspartate(89)-[ribosomal protein uS12]-hydrogen + (sulfur carrier)-H + 5'-deoxyadenosine + L-methionine + A + S-adenosyl-L-homocysteine + 2 H(+). In terms of biological role, catalyzes the methylthiolation of an aspartic acid residue of ribosomal protein uS12. The chain is Ribosomal protein uS12 methylthiotransferase RimO from Klebsiella pneumoniae (strain 342).